Reading from the N-terminus, the 194-residue chain is MPKQTSGKYEKILQAAIEVISEKGLDKASISDIVKKAGTAQGTFYLYFSSKNALIPAIAENLLTHTLDQIKGRLHGDEDFWTVLDILIDETFLITERHKDIIVLCYSGLAIDHSMEKWETIYQPYYSWLEKIINKAIANHEVTEGINSKWTARTIINLVENTAERFYIGFEQDENVEVYKKEIFTFLKRSLGTA.

The HTH tetR-type domain occupies 6 to 66 (SGKYEKILQA…AIAENLLTHT (61 aa)). Residues 29–48 (SISDIVKKAGTAQGTFYLYF) constitute a DNA-binding region (H-T-H motif).

This is an uncharacterized protein from Bacillus subtilis (strain 168).